A 156-amino-acid chain; its full sequence is Small ribosomal subunit protein uS7 (156 aa).

This sequence belongs to the universal ribosomal protein uS7 family. In terms of assembly, part of the 30S ribosomal subunit. Contacts proteins S9 and S11.

One of the primary rRNA binding proteins, it binds directly to 16S rRNA where it nucleates assembly of the head domain of the 30S subunit. Is located at the subunit interface close to the decoding center, probably blocks exit of the E-site tRNA. This chain is Small ribosomal subunit protein uS7, found in Prochlorococcus marinus (strain MIT 9303).